We begin with the raw amino-acid sequence, 179 residues long: Bacterioferritin (179 aa).

Residues 1 to 150 form the Ferritin-like diiron domain; sequence MAGNREDRKA…NIGSHIKNLG (150 aa). The Fe cation site is built by glutamate 23 and glutamate 56. Position 57 (methionine 57) interacts with Fe-coproporphyrin III. Histidine 59, glutamate 99, glutamate 132, and histidine 135 together coordinate Fe cation.

It belongs to the bacterioferritin family. Homooligomer of 24 subunits, arranged as 12 dimers, that are packed together to form an approximately spherical molecule with a central cavity, in which large amounts of iron can be deposited. Fe-coproporphyrin III serves as cofactor. Fe cation is required as a cofactor.

The enzyme catalyses 4 Fe(2+) + O2 + 4 H(+) = 4 Fe(3+) + 2 H2O. It carries out the reaction Fe(2+)(in) = Fe(2+)(out). Functionally, iron-storage protein, whose ferroxidase center binds Fe(2+), oxidizes it using dioxygen to Fe(3+), and participates in the subsequent Fe(3+) oxide mineral core formation within the central cavity of the BFR protein shell. This chain is Bacterioferritin (bfr), found in Desulfovibrio desulfuricans (strain ATCC 27774 / DSM 6949 / MB).